We begin with the raw amino-acid sequence, 178 residues long: MNTPVSVNEKKDFVKWFLNNYQLKQRECVWILNYLMSHDQLMHKVHFVEHAKYCPRGLVMSANCVKDTPFHFFKQNVMTTDAEKSFHDIRLNRDEDIYIQLNFKSSFQNANYVAVLEENPYLPKHIEVNEKDRLLAERFLEESVFSFRRERLLKQIDEALDKQDKEAFHRLTAELKIL.

Belongs to the UPF0302 family.

The protein is UPF0302 protein BcerKBAB4_1445 of Bacillus mycoides (strain KBAB4) (Bacillus weihenstephanensis).